The sequence spans 231 residues: Enolase-phosphatase E1 (231 aa).

Mg(2+) contacts are provided by aspartate 11 and glutamate 13. Substrate is bound by residues 125-126 (SS) and lysine 162. Aspartate 188 serves as a coordination point for Mg(2+).

This sequence belongs to the HAD-like hydrolase superfamily. MasA/MtnC family. In terms of assembly, monomer. Requires Mg(2+) as cofactor.

Its subcellular location is the cytoplasm. It localises to the nucleus. The catalysed reaction is 5-methylsulfanyl-2,3-dioxopentyl phosphate + H2O = 1,2-dihydroxy-5-(methylsulfanyl)pent-1-en-3-one + phosphate. It functions in the pathway amino-acid biosynthesis; L-methionine biosynthesis via salvage pathway; L-methionine from S-methyl-5-thio-alpha-D-ribose 1-phosphate: step 3/6. It participates in amino-acid biosynthesis; L-methionine biosynthesis via salvage pathway; L-methionine from S-methyl-5-thio-alpha-D-ribose 1-phosphate: step 4/6. In terms of biological role, bifunctional enzyme that catalyzes the enolization of 2,3-diketo-5-methylthiopentyl-1-phosphate (DK-MTP-1-P) into the intermediate 2-hydroxy-3-keto-5-methylthiopentenyl-1-phosphate (HK-MTPenyl-1-P), which is then dephosphorylated to form the acireductone 1,2-dihydroxy-3-keto-5-methylthiopentene (DHK-MTPene). In Pyricularia oryzae (strain 70-15 / ATCC MYA-4617 / FGSC 8958) (Rice blast fungus), this protein is Enolase-phosphatase E1.